The following is an 833-amino-acid chain: Translation initiation factor IF-2 (833 aa).

The interval 1-247 is disordered; the sequence is MTEDVKKADG…ALQQAFTKPA (247 aa). Basic and acidic residues-rich tracts occupy residues 53-99 and 110-152; these read QKAE…EAKK and VDVE…RYAE. The segment covering 153-166 has biased composition (acidic residues); sequence LSEEDAENENSEDY. Over residues 187 to 203 the composition is skewed to basic residues; sequence KENRNRGGKNKVAKAKK. Basic and acidic residues predominate over residues 204–227; that stretch reads GGREDESSKTERESNRRNQKDGKM. The tr-type G domain occupies 333–502; the sequence is TRAPVVTIMG…LLQSEVLELT (170 aa). The G1 stretch occupies residues 342–349; that stretch reads GHVDHGKT. 342–349 serves as a coordination point for GTP; sequence GHVDHGKT. Residues 367–371 are G2; that stretch reads GITQH. Residues 388–391 form a G3 region; the sequence is DTPG. Residues 388-392 and 442-445 contribute to the GTP site; these read DTPGH and NKID. The tract at residues 442 to 445 is G4; that stretch reads NKID. Residues 478 to 480 form a G5 region; it reads SAK.

The protein belongs to the TRAFAC class translation factor GTPase superfamily. Classic translation factor GTPase family. IF-2 subfamily.

The protein resides in the cytoplasm. Functionally, one of the essential components for the initiation of protein synthesis. Protects formylmethionyl-tRNA from spontaneous hydrolysis and promotes its binding to the 30S ribosomal subunits. Also involved in the hydrolysis of GTP during the formation of the 70S ribosomal complex. In Pasteurella multocida (strain Pm70), this protein is Translation initiation factor IF-2 (infB).